Reading from the N-terminus, the 156-residue chain is Protein SprT (156 aa).

The region spanning 15-153 is the SprT-like domain; sequence NRYFNKHFTP…CKKCKEILVL (139 aa). Residue H67 participates in Zn(2+) binding. E68 is an active-site residue. H71 serves as a coordination point for Zn(2+).

This sequence belongs to the SprT family. Zn(2+) serves as cofactor.

It is found in the cytoplasm. The sequence is that of Protein SprT from Glaesserella parasuis serovar 5 (strain SH0165) (Haemophilus parasuis).